Here is a 207-residue protein sequence, read N- to C-terminus: Uracil phosphoribosyltransferase (207 aa).

5-phospho-alpha-D-ribose 1-diphosphate-binding positions include Arg-77, Arg-102, and 129–137 (DPMLATGGS). Residues Ile-192 and 197–199 (GDA) each bind uracil. Residue Asp-198 participates in 5-phospho-alpha-D-ribose 1-diphosphate binding.

Belongs to the UPRTase family. Mg(2+) is required as a cofactor.

It carries out the reaction UMP + diphosphate = 5-phospho-alpha-D-ribose 1-diphosphate + uracil. It functions in the pathway pyrimidine metabolism; UMP biosynthesis via salvage pathway; UMP from uracil: step 1/1. Allosterically activated by GTP. Catalyzes the conversion of uracil and 5-phospho-alpha-D-ribose 1-diphosphate (PRPP) to UMP and diphosphate. The protein is Uracil phosphoribosyltransferase of Ureaplasma urealyticum serovar 10 (strain ATCC 33699 / Western).